Reading from the N-terminus, the 859-residue chain is Protein argonaute-2 (859 aa).

Residues methionine 1 to proline 27 form a disordered region. Position 2 is a 3'-nitrotyrosine (tyrosine 2). Pro residues predominate over residues leucine 9–proline 27. The region spanning proline 229–alanine 348 is the PAZ domain. Residues tyrosine 311 to histidine 316 form an interaction with guide RNA region. Residue serine 387 is modified to Phosphoserine. One can recognise a Piwi domain in the interval leucine 517–valine 818. An interaction with guide RNA region spans residues glycine 524 to lysine 566. The segment at phenylalanine 587–proline 590 is interaction with GW182 family members. Aspartate 597 is a binding site for a divalent metal cation. An interaction with GW182 family members region spans residues leucine 650–lysine 660. An a divalent metal cation-binding site is contributed by aspartate 669. 4-hydroxyproline is present on proline 700. Interaction with guide RNA regions lie at residues lysine 709–arginine 710, histidine 753–arginine 761, and tyrosine 790–arginine 812. Position 807 (histidine 807) interacts with a divalent metal cation. Phosphoserine occurs at positions 824, 828, 831, and 834.

Belongs to the argonaute family. Ago subfamily. As to quaternary structure, interacts with DICER1 through its Piwi domain and with TARBP2 during assembly of the RNA-induced silencing complex (RISC). Together, DICER1, AGO2 and TARBP2 constitute the trimeric RISC loading complex (RLC), or micro-RNA (miRNA) loading complex (miRLC). Within the RLC/miRLC, DICER1 and TARBP2 are required to process precursor miRNAs (pre-miRNAs) to mature miRNAs and then load them onto AGO2. AGO2 bound to the mature miRNA constitutes the minimal RISC and may subsequently dissociate from DICER1 and TARBP2. Note however that the term RISC has also been used to describe the trimeric RLC/miRLC. The formation of RISC complexes containing siRNAs rather than miRNAs appears to occur independently of DICER1. Interacts with AGO1. Also interacts with DDB1, DDX5, DDX6, DDX20, DHX30, DHX36, DDX47, DHX9, ELAVL, FXR1, GEMIN4, HNRNPF, IGF2BP1, ILF3, IMP8, MATR3, PABPC1, PRMT5, P4HA1, P4HB, RBM4, SART3, TNRC6A, TNRC6B, UPF1 and YBX1. Interacts with the P-body components DCP1A and XRN1. Associates with polysomes and messenger ribonucleoproteins (mNRPs). Interacts with RBM4; the interaction is modulated under stress-induced conditions, occurs under both cell proliferation and differentiation conditions and in an RNA- and phosphorylation-independent manner. Interacts with LIMD1, WTIP and AJUBA. Interacts with TRIM71; the interaction increases in presence of RNA. Interacts with APOBEC3G in an RNA-dependent manner. Interacts with APOBEC3A, APOBEC3C, APOBEC3F and APOBEC3H. Interacts with DICER1, TARBP2, EIF6, MOV10 and RPL7A (60S ribosome subunit); they form a large RNA-induced silencing complex (RISC). Interacts with FMR1. Interacts with ZFP36. Found in a complex, composed of AGO2, CHD7 and ARB2A. Interacts with RC3H1; the interaction is RNA independent. Interacts with SND1. Interacts with SYT11. Interacts with CLNK. Interacts with GARRE1. Interacts with GRB2; this interaction is important for the formation of a ternary complex containing GRB2, AGO2 and DICER1. (Microbial infection) Interacts with Epstein-Barr virus (EBV) tegument protein BGLF2; this interaction participates in the regulation of cellular miRNA by the virus, leading to enhanced SUMOylation. In terms of assembly, (Microbial infection) Interacts with rotavirus A non-structural protein 5; this interaction probably plays a role in the sequestration of AGO2 in viral factories. As to quaternary structure, (Microbial infection) Interacts with human herpesvirus 8 protein MTA/ORF57; this interaction inhibits P-body formation. It depends on Mg(2+) as a cofactor. Mn(2+) is required as a cofactor. Hydroxylated. 4-hydroxylation appears to enhance protein stability but is not required for miRNA-binding or endonuclease activity. In terms of processing, ubiquitinated on surface-exposed lysines by a SCF-like E3 ubiquitin-protein ligase complex containing ZSWIM8 during target-directed microRNA degradation (TDMD), a process that mediates degradation of microRNAs (miRNAs). Ubiquitination by the SCF-like E3 ubiquitin-protein ligase complex containing ZSWIM8 leads to its subsequent degradation, thereby exposing miRNAs for degradation. ZSWIM8 recognizes and binds AGO2 when it is engaged with a TDMD target. Post-translationally, phosphorylated. A phosphorylation cycle of C-terminal serine cluster (Ser-824-Ser-834) regulates the release of target mRNAs. Target-binding leads to phosphorylation of these residues by CSNK1A1, which reduces the affinity of AGO2 for mRNA and enables target release. The ANKRD52-PPP6C phosphatase complex dephosphorylates the residues, which primes AGO2 for binding a new target. Phosphorylation at Ser-387 by AKT3; leads to up-regulate translational repression of microRNA target and down-regulate endonucleolytic cleavage.

The protein resides in the cytoplasm. Its subcellular location is the P-body. It localises to the nucleus. It carries out the reaction Endonucleolytic cleavage to 5'-phosphomonoester.. Its activity is regulated as follows. Inhibited by EDTA. In terms of biological role, required for RNA-mediated gene silencing (RNAi) by the RNA-induced silencing complex (RISC). The 'minimal RISC' appears to include AGO2 bound to a short guide RNA such as a microRNA (miRNA) or short interfering RNA (siRNA). These guide RNAs direct RISC to complementary mRNAs that are targets for RISC-mediated gene silencing. The precise mechanism of gene silencing depends on the degree of complementarity between the miRNA or siRNA and its target. Binding of RISC to a perfectly complementary mRNA generally results in silencing due to endonucleolytic cleavage of the mRNA specifically by AGO2. Binding of RISC to a partially complementary mRNA results in silencing through inhibition of translation, and this is independent of endonuclease activity. May inhibit translation initiation by binding to the 7-methylguanosine cap, thereby preventing the recruitment of the translation initiation factor eIF4-E. May also inhibit translation initiation via interaction with EIF6, which itself binds to the 60S ribosomal subunit and prevents its association with the 40S ribosomal subunit. The inhibition of translational initiation leads to the accumulation of the affected mRNA in cytoplasmic processing bodies (P-bodies), where mRNA degradation may subsequently occur. In some cases RISC-mediated translational repression is also observed for miRNAs that perfectly match the 3' untranslated region (3'-UTR). Can also up-regulate the translation of specific mRNAs under certain growth conditions. Binds to the AU element of the 3'-UTR of the TNF (TNF-alpha) mRNA and up-regulates translation under conditions of serum starvation. Also required for transcriptional gene silencing (TGS), in which short RNAs known as antigene RNAs or agRNAs direct the transcriptional repression of complementary promoter regions. Its function is as follows. (Microbial infection) Upon Sars-CoV-2 infection, associates with viral miRNA-like small RNA, CoV2-miR-O7a, and may repress mRNAs, such as BATF2, to evade the IFN response. This chain is Protein argonaute-2, found in Homo sapiens (Human).